The primary structure comprises 409 residues: Elongation factor Tu (409 aa).

Residues 10 to 214 (KPHLNIGTIG…AVDSFIPTPE (205 aa)) enclose the tr-type G domain. A G1 region spans residues 19-26 (GHVDHGKT). 19-26 (GHVDHGKT) provides a ligand contact to GTP. Thr26 lines the Mg(2+) pocket. Residues 60-64 (GITIN) form a G2 region. Positions 81 to 84 (DCPG) are G3. GTP-binding positions include 81–85 (DCPGH) and 136–139 (NKED). Positions 136 to 139 (NKED) are G4. The interval 174–176 (SGL) is G5.

The protein belongs to the TRAFAC class translation factor GTPase superfamily. Classic translation factor GTPase family. EF-Tu/EF-1A subfamily. In terms of assembly, monomer.

It localises to the cytoplasm. The catalysed reaction is GTP + H2O = GDP + phosphate + H(+). Functionally, GTP hydrolase that promotes the GTP-dependent binding of aminoacyl-tRNA to the A-site of ribosomes during protein biosynthesis. This Nostoc punctiforme (strain ATCC 29133 / PCC 73102) protein is Elongation factor Tu.